The primary structure comprises 299 residues: Ankyrin repeat domain-containing protein 54 (299 aa).

A disordered region spans residues 1-32 (MAAAAGGADDESRSGRSSSDGECAVAPEPLTG). Ala2 is modified (N-acetylalanine). Ser57 and Ser62 each carry phosphoserine. Residues 98-116 (RRLGPTGKEVHALKRLRDS) carry the Nuclear localization signal (NLS) motif. 4 ANK repeats span residues 108 to 137 (HALK…DPCA), 141 to 170 (KGRT…DPNQ), 174 to 203 (LGNT…RVDA), and 207 to 239 (AGRT…EVKQ). The segment at 140–240 (DKGRTALHFA…EAVRLEVKQI (101 aa)) is LYN-binding. The Nuclear export signal (NES) signature appears at 282-292 (LLASFTSLSLQ).

Interacts (via ankyrin repeat region) with LYN (via SH3-domain) in an activation-independent status of LYN. Forms a multiprotein complex with LYN and HCLS1. Interacts with TSN2, VAV1, DBNL and LASP1.

It localises to the nucleus. It is found in the cytoplasm. The protein resides in the midbody. Plays an important role in regulating intracellular signaling events associated with erythroid terminal differentiation. This chain is Ankyrin repeat domain-containing protein 54 (ANKRD54), found in Bos taurus (Bovine).